Consider the following 367-residue polypeptide: NADH-quinone oxidoreductase subunit D (367 aa).

It belongs to the complex I 49 kDa subunit family. As to quaternary structure, NDH-1 is composed of 14 different subunits. Subunits NuoB, C, D, E, F, and G constitute the peripheral sector of the complex.

The protein localises to the cell inner membrane. The enzyme catalyses a quinone + NADH + 5 H(+)(in) = a quinol + NAD(+) + 4 H(+)(out). Functionally, NDH-1 shuttles electrons from NADH, via FMN and iron-sulfur (Fe-S) centers, to quinones in the respiratory chain. The immediate electron acceptor for the enzyme in this species is believed to be ubiquinone. Couples the redox reaction to proton translocation (for every two electrons transferred, four hydrogen ions are translocated across the cytoplasmic membrane), and thus conserves the redox energy in a proton gradient. This chain is NADH-quinone oxidoreductase subunit D, found in Thermosipho melanesiensis (strain DSM 12029 / CIP 104789 / BI429).